A 476-amino-acid polypeptide reads, in one-letter code: 3-isopropylmalate dehydratase large subunit (476 aa).

[4Fe-4S] cluster-binding residues include Cys-347, Cys-407, and Cys-410. Residues 418–442 are disordered; that stretch reads LAPGERSASTSNRNFEGRQGKGGRT.

The protein belongs to the aconitase/IPM isomerase family. LeuC type 1 subfamily. As to quaternary structure, heterodimer of LeuC and LeuD. Requires [4Fe-4S] cluster as cofactor.

The enzyme catalyses (2R,3S)-3-isopropylmalate = (2S)-2-isopropylmalate. The protein operates within amino-acid biosynthesis; L-leucine biosynthesis; L-leucine from 3-methyl-2-oxobutanoate: step 2/4. In terms of biological role, catalyzes the isomerization between 2-isopropylmalate and 3-isopropylmalate, via the formation of 2-isopropylmaleate. The polypeptide is 3-isopropylmalate dehydratase large subunit (Streptomyces coelicolor (strain ATCC BAA-471 / A3(2) / M145)).